The sequence spans 326 residues: Transmembrane protein 171 (326 aa).

4 helical membrane-spanning segments follow: residues 22-42 (IFFLFVIGAILLCVGVLLSIF), 57-77 (MMLKIAGPACAVVGLGAVILA), 114-134 (LIFGFLFLTSGMLISVLGIWV), and 161-181 (FLSLQILGPLIVLVGLCFFVV). The tract at residues 229–326 (FPESSASAAA…LSPSSEPSPP (98 aa)) is disordered. The span at 230–240 (PESSASAAARS) shows a compositional bias: low complexity. The segment covering 257–266 (SIFQSGSPTP) has biased composition (polar residues). 2 stretches are compositionally biased toward low complexity: residues 288 to 302 (SSSETSHTLHLLSEL) and 312 to 326 (ATTTSLSPSSEPSPP).

It localises to the membrane. The sequence is that of Transmembrane protein 171 (TMEM171) from Bos taurus (Bovine).